The primary structure comprises 507 residues: Cytochrome P450 monooxygenase tpeC (507 aa).

A helical transmembrane segment spans residues 24-44 (TLAIALIVGFVILKAIYNVFF). A heme-binding site is contributed by Cys-449.

Belongs to the cytochrome P450 family. Heme is required as a cofactor.

It localises to the membrane. The protein operates within secondary metabolite biosynthesis. In terms of biological role, cytochrome P450 monooxygenase; part of the gene cluster that mediates the biosynthesis of polyesters containing 2,4-dihydroxy-6-(2-hydroxypropyl)benzoate and 3-hydroxybutyrate moieties, such as talapolyester G, 15G256beta and 15G256beta-2; as well as to oxidized derivatives such as 15G256alpha. The biosynthesis of the polyesters probably starts with the formation of the diketide 3-hydroxybutyryl-S-ACP catalyzed by the partially reducing polyketide synthase tpeA. The acceptance of 3-hydroxybutyryl by the non-reducing polyketide synthase tpeB would initiate further elongation and cyclization, catalyzed by KS and PT, respectively, to form 2,4-dihydroxy-6-(2-hydroxyn-propyl)benzoyl-S-ACP intermediate. The TE domain could catalyze lactonization at this step to yield 6-hydroxymellein as a derailment product. The polyesterification process maybe occurs when additional molecules of 3-hydroxybutyryl are transferred to tpeB. Following the first esterification step, an intramolecular cyclization catalyzed by the TE domain of tpeB would give talarodioxadione 1, whereas the ethyl esterification of talapolyester G perhaps happens spontaneously. Further oxidation by the cytochrome P450 monooxygenase tpeC then leads to the formation of oxidized derivatives. The polypeptide is Cytochrome P450 monooxygenase tpeC (Talaromyces stipitatus (strain ATCC 10500 / CBS 375.48 / QM 6759 / NRRL 1006) (Penicillium stipitatum)).